A 388-amino-acid polypeptide reads, in one-letter code: Arginine biosynthesis bifunctional protein ArgJ (388 aa).

Substrate is bound by residues T150, K172, T183, E263, N383, and S388. T183 acts as the Nucleophile in catalysis.

Belongs to the ArgJ family. As to quaternary structure, heterotetramer of two alpha and two beta chains.

It is found in the cytoplasm. It carries out the reaction N(2)-acetyl-L-ornithine + L-glutamate = N-acetyl-L-glutamate + L-ornithine. The catalysed reaction is L-glutamate + acetyl-CoA = N-acetyl-L-glutamate + CoA + H(+). The protein operates within amino-acid biosynthesis; L-arginine biosynthesis; L-ornithine and N-acetyl-L-glutamate from L-glutamate and N(2)-acetyl-L-ornithine (cyclic): step 1/1. Its pathway is amino-acid biosynthesis; L-arginine biosynthesis; N(2)-acetyl-L-ornithine from L-glutamate: step 1/4. Functionally, catalyzes two activities which are involved in the cyclic version of arginine biosynthesis: the synthesis of N-acetylglutamate from glutamate and acetyl-CoA as the acetyl donor, and of ornithine by transacetylation between N(2)-acetylornithine and glutamate. The sequence is that of Arginine biosynthesis bifunctional protein ArgJ from Corynebacterium glutamicum (strain ATCC 13032 / DSM 20300 / JCM 1318 / BCRC 11384 / CCUG 27702 / LMG 3730 / NBRC 12168 / NCIMB 10025 / NRRL B-2784 / 534).